The following is a 921-amino-acid chain: Glutamate receptor 3.7 (921 aa).

An N-terminal signal peptide occupies residues 1-25 (MGLGIDPSVAITALIVVILVVPMDC). The Extracellular segment spans residues 26–580 (QRPQLVNIGA…WIFLRPFTSR (555 aa)). N-linked (GlcNAc...) asparagine glycans are attached at residues asparagine 214, asparagine 300, asparagine 330, asparagine 369, asparagine 396, asparagine 478, and asparagine 568. A helical transmembrane segment spans residues 581 to 601 (LWCVVLVSFLVIAVVIWILEH). Residues 602-608 (RINEDFR) lie on the Cytoplasmic side of the membrane. The chain crosses the membrane as a helical span at residues 609–629 (GPPRRQLSTMLLFSFSTLFKR). At 630–640 (NQEDTISNLAR) the chain is on the cytoplasmic side. Residues 641 to 661 (LVMIVWLFLLMVLTASYTANL) form a helical membrane-spanning segment. The Extracellular segment spans residues 662–822 (TSILTVQQLP…PEPNQLHLKS (161 aa)). Residues 823-843 (FKGLYLVCIAITVSAFLVFVL) form a helical membrane-spanning segment. Residues 844-921 (RMIRQFVRYR…VQADTEVPRN (78 aa)) are Cytoplasmic-facing. The tract at residues 896–921 (FRRSDDSNNNPSHVGEVQADTEVPRN) is disordered.

Belongs to the glutamate-gated ion channel (TC 1.A.10.1) family. As to quaternary structure, may form heteromers. Expressed predominantly in leaves and siliques. Also detected in roots.

Its subcellular location is the membrane. Glutamate-gated receptor that probably acts as a non-selective cation channel. May be involved in light-signal transduction and calcium homeostasis via the regulation of calcium influx into cells. The polypeptide is Glutamate receptor 3.7 (GLR3.7) (Arabidopsis thaliana (Mouse-ear cress)).